We begin with the raw amino-acid sequence, 283 residues long: Zinc-finger homeodomain protein 8 (283 aa).

A ZF-HD dimerization-type; degenerate zinc finger spans residues Y23–A68. 2 disordered regions span residues A131–T171 and G244–V283. The segment covering G148–F161 has biased composition (gly residues). The homeobox DNA-binding region spans R163 to P226. Gly residues predominate over residues G244–D256. The span at G257–D266 shows a compositional bias: acidic residues. Residues P269–V283 show a composition bias toward low complexity.

In terms of assembly, homo- and heterodimer with other ZFHD proteins.

It localises to the nucleus. Its function is as follows. Putative transcription factor. In Oryza sativa subsp. japonica (Rice), this protein is Zinc-finger homeodomain protein 8 (ZHD8).